A 483-amino-acid chain; its full sequence is Cyclic AMP-dependent transcription factor ATF-7 (483 aa).

A transactivation domain region spans residues 1–285 (MGDDRPFVCN…GMVVGTASTM (285 aa)). The segment at 7–31 (FVCNAPGCGQRFTNEDHLAVHKHKH) adopts a C2H2-type zinc-finger fold. The residue at position 51 (Thr-51) is a Phosphothreonine; by MAPK11. Phosphothreonine occurs at positions 53 and 101. Residue Lys-107 forms a Glycyl lysine isopeptide (Lys-Gly) (interchain with G-Cter in SUMO1) linkage. Disordered regions lie at residues 110-148 (EPVE…TPTP) and 299-345 (HPDA…NRAA). Composition is skewed to low complexity over residues 114-126 (VDSS…ASSP) and 307-320 (QPQV…PSTG). Residues 325 to 483 (RTVDEDPDER…MTPQSQSAGR (159 aa)) form an essential for binding adenovirus 2 E1A region. Residues 326-343 (TVDEDPDERRQRFLERNR) show a composition bias toward basic and acidic residues. The bZIP domain occupies 332–395 (DERRQRFLER…AQLKQLLLAH (64 aa)). The tract at residues 334-354 (RRQRFLERNRAAASRCRQKRK) is basic motif. Residues 360–388 (LEKKAEELTSQNIQLSNEVTLLRNEVAQL) form a leucine-zipper region. The interval 407 to 439 (TQGYLESPKESSEPTGSPAPVIQHSSATAPSNG) is disordered. Residues Ser-413 and Ser-423 each carry the phosphoserine modification. Over residues 429-439 (QHSSATAPSNG) the composition is skewed to polar residues.

This sequence belongs to the bZIP family. As to quaternary structure, homodimer; binds DNA as homodimer. Heterodimer; heterodimerizes with other members of ATF family and with JUN family members. Interacts with JNK2; the interaction does not phosphorylate ATF7 but acts as a docking site for other ATF-associated partners such as JUN family members. Interacts (via its transactivation domain) with TAF12 (isoforms TAFII15 and TAFII20); the interaction potentiates the transactivation activity (isoform TAFII20 only) and is inhibited by ATF7 sumoylation. Interacts with TAF4; the interaction inhibits the TAF12-dependent transactivation. Interacts with MAPK9; the interaction does not phosphorylate ATF7 but acts as a docking site for ATF7-associated partners such as JUN. Interacts with Ku complex components XRCC6 and XRCC7. Interacts with TERT. In terms of assembly, (Microbial infection) Interacts with adenovirus 2 E1A; the interaction enhances the ATF7-mediated viral transactivation activity which requires the zinc-binding domains of both E1A and ATF7. On EGF stimulation, phosphorylated first on Thr-53 allowing subsequent phosphorylation on Thr-51. This latter phosphorylation prevents sumoylation, increases binding to TAF12 and enhances transcriptional activity. In terms of processing, sumoylation delays nuclear localization and inhibits transactivation activity through preventing binding to TAF12. RANBP2 appears to be the specific E3 ligase. Post-translationally, on EGF stimulation, phosphorylated first on Thr-53 allowing subsequent phosphorylation on Thr-51. This latter phosphorylation prevents sumoylation, increases binding to TAF12 and enhances transcriptional activity. Social isolation stress as well as TNF-alpha also induce the phosphorylation of ATF7. Phosphorylated in proliferating colonic and small intestinal epithelial cells. In terms of tissue distribution, expressed in various tissues including heart, brain, placenta, lung and skeletal muscle. Highest levels in skeletal muscle. Lowest in lung and placenta. As to expression, strongly expressed in skeletal muscle. Also expressed at lower levels in heart and lung.

It localises to the nucleus. The protein localises to the nucleoplasm. Its subcellular location is the chromosome. The protein resides in the telomere. It is found in the cytoplasm. In terms of biological role, stress-responsive chromatin regulator that plays a role in various biological processes including innate immunological memory, adipocyte differentiation or telomerase regulation. In absence of stress, contributes to the formation of heterochromatin and heterochromatin-like structure by recruiting histone H3K9 tri- and di-methyltransferases thus silencing the transcription of target genes such as STAT1 in adipocytes, or genes involved in innate immunity in macrophages and adipocytes. Stress induces ATF7 phosphorylation that disrupts interactions with histone methyltransferase and enhances the association with coactivators containing histone acetyltransferase and/or histone demethylase, leading to disruption of the heterochromatin-like structure and subsequently transcriptional activation. In response to TNF-alpha, which is induced by various stresses, phosphorylated ATF7 and telomerase are released from telomeres leading to telomere shortening. Also plays a role in maintaining epithelial regenerative capacity and protecting against cell death during intestinal epithelial damage and repair. Functionally, acts as a dominant repressor of the E-selectin/NF-ELAM1/delta-A promoter. Acts as a negative regulator, inhibiting both ATF2 and ATF7 transcriptional activities. It may exert these effects by sequestrating in the cytoplasm the Thr-53 phosphorylating kinase, preventing activation. The sequence is that of Cyclic AMP-dependent transcription factor ATF-7 (ATF7) from Homo sapiens (Human).